The chain runs to 111 residues: ASFBZAPPGBVKSGEKIFKTKCAQCHTVDKGAGHKQGPNLNGLFGRQSGTTPGYSYSAANKNMAVIWGENTLYDYLLNPKKYIPGTKMVFPGLKKPQERADLIAYLKEATA.

A1 is modified (N-acetylalanine). Heme c is bound by residues C22, C25, and H26. K80 is modified (N6,N6,N6-trimethyllysine). A heme c-binding site is contributed by M88. At K94 the chain carries N6,N6,N6-trimethyllysine.

The protein belongs to the cytochrome c family. In terms of processing, binds 1 heme c group covalently per subunit.

The protein resides in the mitochondrion intermembrane space. Its function is as follows. Electron carrier protein. The oxidized form of the cytochrome c heme group can accept an electron from the heme group of the cytochrome c1 subunit of cytochrome reductase. Cytochrome c then transfers this electron to the cytochrome oxidase complex, the final protein carrier in the mitochondrial electron-transport chain. The protein is Cytochrome c of Sesamum indicum (Oriental sesame).